Here is a 578-residue protein sequence, read N- to C-terminus: SUMOylated effector protein AmpA (578 aa).

The disordered stretch occupies residues 144 to 169 (PQTVDPSVVESATGSGVDTQEEQEID). 3 tandem repeats follow at residues 180-272 (TEEQ…SVEA), 304-425 (KEET…VSVE), and 428-557 (TEEP…MQQE). Residues 180 to 557 (TEEQEVILEE…VEADAGMQQE (378 aa)) are 3 X approximate tandem repeats. The tract at residues 516-578 (VSVEADAGMQ…DPDDEDVLSY (63 aa)) is disordered.

Polysumoylated during infection on at least two lysine residues, in the N- and C-terminal section. SUMO2/3 modification of AmpA throughout the infection cycle is likely critical for bacterial intracellular survival, while terminal SUMO1 conjugation of AmpA may promote a late-stage infection cycle event. Only a small portion of the available AmpA pool is actually SUMOylated at any given time.

The protein resides in the secreted. It is found in the host membrane. The protein localises to the host cytoplasm. Its subcellular location is the host cytosol. Its function is as follows. Secreted effector that hijacks host cell SUMOylation during A.phagocytophilum infection and is important for the pathogen's intracellular survival. In Anaplasma phagocytophilum (strain HZ), this protein is SUMOylated effector protein AmpA.